The sequence spans 123 residues: Inter-alpha-trypsin inhibitor (123 aa).

2 BPTI/Kunitz inhibitor domains span residues 5–55 (CQLG…LQTC) and 61–111 (CNLP…KEYC). Intrachain disulfides connect Cys5-Cys55, Cys14-Cys38, Cys30-Cys51, Cys61-Cys111, Cys70-Cys94, and Cys86-Cys107. Asn24 carries an N-linked (GlcNAc...) asparagine glycan.

It localises to the secreted. In terms of biological role, this inhibitory fragment, released from native ITI after limited proteolysis with trypsin, contains two homologous domains. Whereas the second domain is a strong inhibitor of trypsin, the first domain interacts weakly with PMN-granulocytic elastase and not at all with pancreatic elastase. The polypeptide is Inter-alpha-trypsin inhibitor (Capra hircus (Goat)).